Reading from the N-terminus, the 105-residue chain is MSKRDWLDFEHLVDDEVRDAIKPPSMYKVILVNDDYTPMEFVIDVLQKFFSYDVERATQLMLTVHYEGKAICGVFTAEVAETKVAMVNQYARENEHPLLCTLEKA.

It belongs to the ClpS family. As to quaternary structure, binds to the N-terminal domain of the chaperone ClpA.

Functionally, involved in the modulation of the specificity of the ClpAP-mediated ATP-dependent protein degradation. In Klebsiella pneumoniae (strain 342), this protein is ATP-dependent Clp protease adapter protein ClpS.